A 195-amino-acid chain; its full sequence is Myelin-associated neurite-outgrowth inhibitor (195 aa).

Met-1 bears the N-acetylmethionine mark. Over 1-18 the chain is Cytoplasmic; that stretch reads MNPVYSPGSSGVPYANAK. A Phosphoserine modification is found at Ser-6. A helical transmembrane segment spans residues 19 to 42; that stretch reads GIGYPAGFPMGYAAAAPAYSPNMY. Topologically, residues 43 to 142 are extracellular; the sequence is PGANPTFQTG…PAPIPPPRGN (100 aa). Residue Asn-46 is glycosylated (N-linked (GlcNAc...) asparagine). A helical membrane pass occupies residues 143-164; it reads GVTMGMVAGTTMAMSAGTLLTA. Over 165 to 195 the chain is Cytoplasmic; that stretch reads HSPTPVAPHPVTVPTYRAPGTPTYSYVPPQW.

Belongs to the FAM168 family. In terms of assembly, may form homodimers. May interact with DAZAP2, FAM168A, PRDX6, RBM6, TMTC1 and YPEL2. Interacts with CDC27. N-glycosylated. As to expression, expressed in the brain, within neuronal axonal fibers and associated with myelin sheets (at protein level). Expression tends to be lower in the brain of Alzheimer disease patients compared to healthy individuals (at protein level).

The protein localises to the cytoplasm. Its subcellular location is the perinuclear region. The protein resides in the cell membrane. It localises to the cell projection. It is found in the axon. In terms of biological role, inhibitor of neuronal axonal outgrowth. Acts as a negative regulator of CDC42 and STAT3 and a positive regulator of STMN2. Positive regulator of CDC27. This is Myelin-associated neurite-outgrowth inhibitor (FAM168B) from Homo sapiens (Human).